The primary structure comprises 347 residues: MRWKRMMQLLDVHCEGEIGKVAIGGVPKIPGDTVADQLHWLNTDPKGRELRHFLVLEPRGAPIGSVNLLLPAKDSRADAAFIILQPDQAHASSGSNSICVTTALLESGMIEMQEPETVVMLETAAGLVKAVAQCRDGHCDSVTLTMVPSFVHELDAQIATESWGEIRFDLAYGGVFYALVDVRQLGLTIEPGNARRLVEAGMLLKGEINQRIQVVHPDIPAISGVAYVMFRDEDPDGAVRTCTTMWPGRVDRSPCGTGNSANLATLHARGRVKPGDSFLSRSIIGSQFTVGLQGLTTVAGRSAVIPTITGRGFTYGIHQVALDAFDPLGGGFVLTDVWGAAAETIKI.

Residue Gln85 coordinates substrate. Ser93 acts as the Proton acceptor in catalysis. Residues 94-95 and Asp251 contribute to the substrate site; that span reads GS. The active-site Proton donor is the Cys255. 256–257 contributes to the substrate binding site; it reads GT.

The protein belongs to the proline racemase family.

The enzyme catalyses trans-4-hydroxy-L-proline = cis-4-hydroxy-D-proline. In terms of biological role, catalyzes the epimerization of trans-4-hydroxy-L-proline (t4LHyp) to cis-4-hydroxy-D-proline (c4DHyp). May be involved in a degradation pathway of t4LHyp. Can also catalyze the epimerization of trans-3-hydroxy-L-proline (t3LHyp) to cis-3-hydroxy-D-proline (c3DHyp) in vitro. Displays no proline racemase activity. The polypeptide is 4-hydroxyproline 2-epimerase (Allorhizobium ampelinum (strain ATCC BAA-846 / DSM 112012 / S4) (Agrobacterium vitis (strain S4))).